Consider the following 102-residue polypeptide: Large ribosomal subunit protein bL21 (102 aa).

Belongs to the bacterial ribosomal protein bL21 family. As to quaternary structure, part of the 50S ribosomal subunit. Contacts protein L20.

This protein binds to 23S rRNA in the presence of protein L20. This chain is Large ribosomal subunit protein bL21, found in Phytoplasma mali (strain AT).